The chain runs to 790 residues: LMBR1 domain-containing protein 2 homolog B (790 aa).

The segment covering Met1 to Ser21 has biased composition (low complexity). Positions Met1–Ile22 are disordered. 5 consecutive transmembrane segments (helical) span residues Phe34–Gly54, Ile66–Val86, Phe128–Ser148, Val167–Val187, and Phe195–Met215. Residues Leu236–Thr266 adopt a coiled-coil conformation. 3 helical membrane passes run Phe401–Val421, Pro442–Tyr462, and Phe539–His559. Disordered regions lie at residues Ser630–Ser665, Leu701–Lys751, and Ser765–Lys790. The span at Ile644–Ser665 shows a compositional bias: polar residues. Residues Asn706–Ser734 are compositionally biased toward low complexity. Residues Ile735–Pro746 show a composition bias toward polar residues. Residues Phe766–Glu778 are compositionally biased toward acidic residues.

The protein belongs to the LIMR family.

The protein resides in the membrane. The chain is LMBR1 domain-containing protein 2 homolog B from Dictyostelium discoideum (Social amoeba).